The primary structure comprises 661 residues: UvrABC system protein B (661 aa).

The Helicase ATP-binding domain occupies 25–182 (AGLSSKKRSQ…NDLINLQYER (158 aa)). Residue 38–45 (GITGSGKT) participates in ATP binding. Positions 91–114 (YYDYYQPEAYIARTDTFIEKDSSI) match the Beta-hairpin motif. The 163-residue stretch at 430 to 592 (QVEDLISEIQ…IIPKTINRAI (163 aa)) folds into the Helicase C-terminal domain. Residues 621–656 (KTHIDKLKKEMLKAASNLEFEQAVKLRDQLKTLEEA) enclose the UVR domain.

Belongs to the UvrB family. As to quaternary structure, forms a heterotetramer with UvrA during the search for lesions. Interacts with UvrC in an incision complex.

The protein localises to the cytoplasm. Functionally, the UvrABC repair system catalyzes the recognition and processing of DNA lesions. A damage recognition complex composed of 2 UvrA and 2 UvrB subunits scans DNA for abnormalities. Upon binding of the UvrA(2)B(2) complex to a putative damaged site, the DNA wraps around one UvrB monomer. DNA wrap is dependent on ATP binding by UvrB and probably causes local melting of the DNA helix, facilitating insertion of UvrB beta-hairpin between the DNA strands. Then UvrB probes one DNA strand for the presence of a lesion. If a lesion is found the UvrA subunits dissociate and the UvrB-DNA preincision complex is formed. This complex is subsequently bound by UvrC and the second UvrB is released. If no lesion is found, the DNA wraps around the other UvrB subunit that will check the other stand for damage. The polypeptide is UvrABC system protein B (Rickettsia rickettsii (strain Sheila Smith)).